Here is a 326-residue protein sequence, read N- to C-terminus: tRNA-modifying protein YgfZ (326 aa).

Folate contacts are provided by tryptophan 27 and tryptophan 189.

This sequence belongs to the tRNA-modifying YgfZ family.

The protein resides in the cytoplasm. In terms of biological role, folate-binding protein involved in regulating the level of ATP-DnaA and in the modification of some tRNAs. It is probably a key factor in regulatory networks that act via tRNA modification, such as initiation of chromosomal replication. This is tRNA-modifying protein YgfZ from Shigella sonnei (strain Ss046).